The chain runs to 293 residues: Methylsterol monooxygenase 1 (293 aa).

Transmembrane regions (helical) follow at residues 55 to 75 (LIVHEAIYFLFSLPGFLFQFI) and 100 to 120 (KILFNHFFIQLPLICGTYYFT). The Fatty acid hydroxylase domain occupies 144 to 274 (GCAVIEDTWH…FTWWDKLFGT (131 aa)). Positions 157–161 (HRLLH) match the Histidine box-1 motif. Positions 170–174 (HKVHH) match the Histidine box-2 motif. A helical membrane pass occupies residues 199–219 (FFIGIVLLCDHVILLWAWVTI). The short motif at 249–255 (HHDFHHM) is the Histidine box-3 element.

It belongs to the sterol desaturase family. Fe cation serves as cofactor. Post-translationally, ubiquitinated by MARCHF6, leading to proteasomal degradation.

Its subcellular location is the endoplasmic reticulum membrane. The enzyme catalyses 4,4-dimethyl-5alpha-cholest-7-en-3beta-ol + 6 Fe(II)-[cytochrome b5] + 3 O2 + 5 H(+) = 4alpha-carboxy-4beta-methyl-5alpha-cholest-7-ene-3beta-ol + 6 Fe(III)-[cytochrome b5] + 4 H2O. The catalysed reaction is 4,4-dimethyl-5alpha-cholesta-8,24-dien-3beta-ol + 6 Fe(II)-[cytochrome b5] + 3 O2 + 5 H(+) = 4beta-methylzymosterol-4alpha-carboxylate + 6 Fe(III)-[cytochrome b5] + 4 H2O. It catalyses the reaction 4alpha-methylzymosterol + 6 Fe(II)-[cytochrome b5] + 3 O2 + 5 H(+) = 4alpha-carboxyzymosterol + 6 Fe(III)-[cytochrome b5] + 4 H2O. It carries out the reaction 4alpha-methyl-5alpha-cholest-7-en-3beta-ol + 6 Fe(II)-[cytochrome b5] + 3 O2 + 5 H(+) = 4alpha-carboxy-5alpha-cholest-7-en-3beta-ol + 6 Fe(III)-[cytochrome b5] + 4 H2O. The enzyme catalyses 4,4-dimethyl-5alpha-cholest-8-en-3beta-ol + 6 Fe(II)-[cytochrome b5] + 3 O2 + 5 H(+) = 4alpha-carboxy-4beta-methyl-5alpha-cholest-8-en-3beta-ol + 6 Fe(III)-[cytochrome b5] + 4 H2O. The catalysed reaction is 4alpha-methyl-5alpha-cholest-8-en-3beta-ol + 6 Fe(II)-[cytochrome b5] + 3 O2 + 5 H(+) = 4alpha-carboxy-5alpha-cholest-8-ene-3beta-ol + 6 Fe(III)-[cytochrome b5] + 4 H2O. The protein operates within steroid biosynthesis; zymosterol biosynthesis; zymosterol from lanosterol: step 3/6. Its pathway is steroid biosynthesis; cholesterol biosynthesis. In terms of biological role, catalyzes the three-step monooxygenation required for the demethylation of 4,4-dimethyl and 4alpha-methylsterols, which can be subsequently metabolized to cholesterol. This is Methylsterol monooxygenase 1 (Msmo1) from Mus musculus (Mouse).